The primary structure comprises 445 residues: Coronin-A (445 aa).

WD repeat units follow at residues 77-117 (GHKS…LTDS), 127-167 (GHKR…NLTT), 170-209 (GHSDMITSCEWNHNGSQIVTTCKDKKARVFDPRTNSIVNE), and 259-299 (DSAS…PYIH). Residues 410–444 (KNEKELREEYEKLKIRVAYLESEIVKKDAKIKELT) are a coiled coil.

It belongs to the WD repeat coronin family. Binds to F-actin.

It is found in the cell surface. In terms of biological role, required for normal motility. Participates in cytokinesis. This chain is Coronin-A (corA), found in Dictyostelium discoideum (Social amoeba).